The following is a 357-amino-acid chain: 4-hydroxyphenylpyruvate dioxygenase (357 aa).

VOC domains are found at residues Gly17–Arg137 and Tyr165–Asp316. Fe cation contacts are provided by His168, His246, and Glu325.

The protein belongs to the 4HPPD family. Homotetramer. Fe cation serves as cofactor.

It catalyses the reaction 3-(4-hydroxyphenyl)pyruvate + O2 = homogentisate + CO2. The protein operates within amino-acid degradation; L-phenylalanine degradation; acetoacetate and fumarate from L-phenylalanine: step 3/6. In Pseudomonas aeruginosa (strain ATCC 15692 / DSM 22644 / CIP 104116 / JCM 14847 / LMG 12228 / 1C / PRS 101 / PAO1), this protein is 4-hydroxyphenylpyruvate dioxygenase (hpd).